A 90-amino-acid chain; its full sequence is Bombyxin B-5 (90 aa).

The first 20 residues, 1–20 (MMKTAVMFILVVVISLTYSS), serve as a signal peptide directing secretion. Intrachain disulfides connect Cys-30–Cys-75, Cys-42–Cys-88, and Cys-74–Cys-79. The propeptide at 49–64 (GGAQYAPYWQETYLRS) is c peptide like.

It belongs to the insulin family. As to quaternary structure, heterodimer of a B chain and an A chain linked by two disulfide bonds.

Its subcellular location is the secreted. Functionally, brain peptide responsible for activation of prothoracic glands to produce ecdysone in insects. This chain is Bombyxin B-5 (BBXB5), found in Bombyx mori (Silk moth).